The primary structure comprises 201 residues: Holliday junction branch migration complex subunit RuvA (201 aa).

Residues 1 to 63 (MIEYIKGEIA…EDAYVLYGFA (63 aa)) are domain I. Positions 64-142 (DKQERELFLL…TGAMAATAVG (79 aa)) are domain II. Positions 143–153 (GAAGALLPAMN) are flexible linker. A domain III region spans residues 153 to 201 (NAEVQEEAIAALTMLGFAAAPSQKAVLAILKEEPDAPVEKVIKLALKRL).

It belongs to the RuvA family. As to quaternary structure, homotetramer. Forms an RuvA(8)-RuvB(12)-Holliday junction (HJ) complex. HJ DNA is sandwiched between 2 RuvA tetramers; dsDNA enters through RuvA and exits via RuvB. An RuvB hexamer assembles on each DNA strand where it exits the tetramer. Each RuvB hexamer is contacted by two RuvA subunits (via domain III) on 2 adjacent RuvB subunits; this complex drives branch migration. In the full resolvosome a probable DNA-RuvA(4)-RuvB(12)-RuvC(2) complex forms which resolves the HJ.

The protein localises to the cytoplasm. Functionally, the RuvA-RuvB-RuvC complex processes Holliday junction (HJ) DNA during genetic recombination and DNA repair, while the RuvA-RuvB complex plays an important role in the rescue of blocked DNA replication forks via replication fork reversal (RFR). RuvA specifically binds to HJ cruciform DNA, conferring on it an open structure. The RuvB hexamer acts as an ATP-dependent pump, pulling dsDNA into and through the RuvAB complex. HJ branch migration allows RuvC to scan DNA until it finds its consensus sequence, where it cleaves and resolves the cruciform DNA. This is Holliday junction branch migration complex subunit RuvA from Bacteroides fragilis (strain ATCC 25285 / DSM 2151 / CCUG 4856 / JCM 11019 / LMG 10263 / NCTC 9343 / Onslow / VPI 2553 / EN-2).